The sequence spans 216 residues: Cytidylate kinase (216 aa).

ATP is bound at residue 7 to 15 (GPSGTGKST).

It belongs to the cytidylate kinase family. Type 1 subfamily.

Its subcellular location is the cytoplasm. It catalyses the reaction CMP + ATP = CDP + ADP. The catalysed reaction is dCMP + ATP = dCDP + ADP. In Chlamydia caviae (strain ATCC VR-813 / DSM 19441 / 03DC25 / GPIC) (Chlamydophila caviae), this protein is Cytidylate kinase.